The primary structure comprises 285 residues: tRNA uridine(34) hydroxylase (285 aa).

In terms of domain architecture, Rhodanese spans 130-225; sequence RGDDVVFFDG…YGEAFGDTGL (96 aa). Catalysis depends on C185, which acts as the Cysteine persulfide intermediate.

It belongs to the TrhO family.

It catalyses the reaction uridine(34) in tRNA + AH2 + O2 = 5-hydroxyuridine(34) in tRNA + A + H2O. In terms of biological role, catalyzes oxygen-dependent 5-hydroxyuridine (ho5U) modification at position 34 in tRNAs. The polypeptide is tRNA uridine(34) hydroxylase (Rhodococcus opacus (strain B4)).